Consider the following 175-residue polypeptide: Gamma-crystallin B (175 aa).

Beta/gamma crystallin 'Greek key' domains are found at residues 2–40 (GKITFYEDRGFQGHCYECSSDCPNLQPYFSRCNSIRVDS) and 41–83 (GCWM…RLIP). A glycan (N-linked (Glc) (glycation) lysine; in vitro) is linked at Lys3. Cys19 and Cys23 are oxidised to a cystine. The interval 84 to 88 (QHTGT) is connecting peptide. Beta/gamma crystallin 'Greek key' domains lie at 89-129 (FRMR…NVLE) and 130-172 (GSWV…RRVM).

It belongs to the beta/gamma-crystallin family.

Crystallins are the dominant structural components of the vertebrate eye lens. The chain is Gamma-crystallin B (CRYGB) from Bos taurus (Bovine).